A 685-amino-acid chain; its full sequence is Beta-taxilin (685 aa).

Positions 1–135 are disordered; that stretch reads MEINHPDQLS…KEPVSNKEQK (135 aa). Residues 18-28 are compositionally biased toward polar residues; sequence GDSSSLNQNGP. 2 stretches are compositionally biased toward basic and acidic residues: residues 47 to 67 and 80 to 90; these read GSLHPEKGAHDVAEELSRQLE and RGKESTSETKE. The segment covering 98–113 has biased composition (acidic residues); the sequence is PDNEDVDYEETTEEID. Coiled coils occupy residues 138–354 and 381–470; these read KKIL…VLKE and NEVF…SEKE. Over residues 465–478 the composition is skewed to basic and acidic residues; sequence KMSEKEDQVQRTSE. Disordered stretches follow at residues 465-497 and 517-685; these read KMSEKEDQVQRTSEEEPEPSVSENEEVDAEEAN and EFTP…NGVD. Phosphoserine occurs at positions 477, 484, and 486. A compositionally biased stretch (acidic residues) spans 479-495; that stretch reads EEPEPSVSENEEVDAEE. The span at 575–591 shows a compositional bias: low complexity; it reads CEATPAPTASCTPAEAE. Residues 612 to 627 show a composition bias toward polar residues; sequence ANTSGQAPLSPAQGSL.

Belongs to the taxilin family. In terms of assembly, binds to the C-terminal coiled coil region of syntaxin family members STX1A, STX3A and STX4A. Has a preference for STX1A. In terms of tissue distribution, specifically expressed in skeletal muscle.

Its function is as follows. Promotes motor nerve regeneration. May be involved in intracellular vesicle traffic. The sequence is that of Beta-taxilin (Txlnb) from Mus musculus (Mouse).